The chain runs to 260 residues: Putative ABC transporter ATP-binding protein PF0068 (260 aa).

The region spanning Ile2–Pro234 is the ABC transporter domain. Gly34 to Thr41 contributes to the ATP binding site.

This sequence belongs to the ABC transporter superfamily.

Its subcellular location is the cell membrane. In terms of biological role, probably part of an ABC transporter complex. Responsible for energy coupling to the transport system. This chain is Putative ABC transporter ATP-binding protein PF0068, found in Pyrococcus furiosus (strain ATCC 43587 / DSM 3638 / JCM 8422 / Vc1).